Consider the following 413-residue polypeptide: FAD-dependent monooxygenase vrtH (413 aa).

A signal peptide spans 1-23 (MQRANHTRPVLIIGAGLSGLAIG). Asparagine 5 is a glycosylation site (N-linked (GlcNAc...) asparagine). FAD-binding residues include glutamate 37 and alanine 48. Asparagine 94 carries an N-linked (GlcNAc...) asparagine glycan. Arginine 120 contacts FAD. N-linked (GlcNAc...) asparagine glycosylation is present at asparagine 232. FAD is bound by residues aspartate 327 and glycine 340.

It belongs to the paxM FAD-dependent monooxygenase family. It depends on FAD as a cofactor.

The protein operates within secondary metabolite biosynthesis; terpenoid biosynthesis. In terms of biological role, FAD-dependent monooxygenase; part of the gene cluster that mediates the biosynthesis of viridicatumtoxin, a tetracycline-like fungal meroterpenoid with a unique, fused spirobicyclic ring system. The first step of the pathway is the production of the malonamoyl-CoA starter unit for the polyketide synthase vrtA. The aldolase vrtJ may be involved in the synthesis of the malonamate substrate for malonamoyl-CoA synthetase vrtB. The polyketide synthase vrtA then may utilize the malonamoyl-CoA starter unit, followed by sequential condensation of eight malonyl-CoA units to form the polyketide backbone. The cyclization of the last ring could be mediated by the lactamase-like protein vrtG. The proposed post-PKS tailoring steps are a hydroxylation at C5 catalyzed the cytochrome P450 monooxygenase vrtE, a hydroxylation at C12a catalyzed by VrtH and/or VrtI, and an O-methylation by the O-methyltransferase vrtF. VrtC is then proposed to catalyze the transfer of a geranyl group synthesized by vrtD to the aromatic C ring of the tetracyclic polyketide intermediate of viridicatumtoxin to yield previridicatumtoxin. Finally, the cytochrome P450 monooxygenase vrtK catalyzes the spirocyclization of the geranyl moiety of previridicatumtoxin to afford viridicatumtoxin. The polypeptide is FAD-dependent monooxygenase vrtH (Penicillium aethiopicum).